A 34-amino-acid polypeptide reads, in one-letter code: MSDIN-like toxin proprotein 4 (34 aa).

The propeptide occupies Met1–Pro10. The cyclopeptide (Val-Pro) cross-link spans Val11–Pro17. A propeptide spanning residues Cys18–Cys34 is cleaved from the precursor.

This sequence belongs to the MSDIN fungal toxin family. Processed by the macrocyclase-peptidase enzyme POPB to yield a toxic cyclic heptapeptide. POPB first removes 10 residues from the N-terminus. Conformational trapping of the remaining peptide forces the enzyme to release this intermediate rather than proceed to macrocyclization. The enzyme rebinds the remaining peptide in a different conformation and catalyzes macrocyclization of the N-terminal 7 residues. As to expression, expressed in basidiocarps.

Functionally, probable toxin that belongs to the MSDIN-like toxin family responsible for a large number of food poisoning cases and deaths. The chain is MSDIN-like toxin proprotein 4 from Amanita exitialis (Guangzhou destroying angel).